The following is a 208-amino-acid chain: Protein-L-isoaspartate O-methyltransferase (208 aa).

Residue Ser59 is part of the active site.

The protein belongs to the methyltransferase superfamily. L-isoaspartyl/D-aspartyl protein methyltransferase family.

Its subcellular location is the cytoplasm. The enzyme catalyses [protein]-L-isoaspartate + S-adenosyl-L-methionine = [protein]-L-isoaspartate alpha-methyl ester + S-adenosyl-L-homocysteine. Functionally, catalyzes the methyl esterification of L-isoaspartyl residues in peptides and proteins that result from spontaneous decomposition of normal L-aspartyl and L-asparaginyl residues. It plays a role in the repair and/or degradation of damaged proteins. This chain is Protein-L-isoaspartate O-methyltransferase, found in Pectobacterium atrosepticum (strain SCRI 1043 / ATCC BAA-672) (Erwinia carotovora subsp. atroseptica).